The following is a 316-amino-acid chain: Ribosomal RNA small subunit methyltransferase H (316 aa).

S-adenosyl-L-methionine contacts are provided by residues 35–37, Asp-55, Phe-84, Asp-105, and Gln-112; that span reads SGH.

Belongs to the methyltransferase superfamily. RsmH family.

Its subcellular location is the cytoplasm. It carries out the reaction cytidine(1402) in 16S rRNA + S-adenosyl-L-methionine = N(4)-methylcytidine(1402) in 16S rRNA + S-adenosyl-L-homocysteine + H(+). Its function is as follows. Specifically methylates the N4 position of cytidine in position 1402 (C1402) of 16S rRNA. This Streptococcus dysgalactiae subsp. equisimilis (strain GGS_124) protein is Ribosomal RNA small subunit methyltransferase H.